The sequence spans 942 residues: tRNAse Z TRZ4, mitochondrial (942 aa).

A mitochondrion-targeting transit peptide spans 1 to 50 (MLTSSMPQNLSLFGFSPLKSSSFALILRPFSLYPPIFASSSPAPSRRPPR). The interval 38-85 (ASSSPAPSRRPPRTAGYRRSGPSPPRRKWSSFEEQKRKGRSPMEKDKA) is disordered. The segment covering 67 to 85 (SSFEEQKRKGRSPMEKDKA) has biased composition (basic and acidic residues).

Belongs to the RNase Z family. Homodimer. Zn(2+) serves as cofactor. Ca(2+) is required as a cofactor. The cofactor is Mn(2+). It depends on Mg(2+) as a cofactor.

It localises to the mitochondrion. The catalysed reaction is Endonucleolytic cleavage of RNA, removing extra 3' nucleotides from tRNA precursor, generating 3' termini of tRNAs. A 3'-hydroxy group is left at the tRNA terminus and a 5'-phosphoryl group is left at the trailer molecule.. Zinc phosphodiesterase, which displays tRNA 3'-processing endonuclease activity. Involved in tRNA maturation, by removing a 3'-trailer from precursor tRNA. Can process the mitochondrial tRNA-like structures (t-elements). The chain is tRNAse Z TRZ4, mitochondrial from Arabidopsis thaliana (Mouse-ear cress).